The primary structure comprises 223 residues: Pre-protein VI (223 aa).

Residues 1–28 (MDYAALSPHLGGWALRDHHIGDSSLRGG) constitute a propeptide that is removed on maturation. Residues 29 to 53 (AINWGNLGSRITSALNSTGRWLYNT) form an amphipathic alpha-helix essential for membrane lytic activity region. An involved in endosomal membrane lysis region spans residues 31–52 (NWGNLGSRITSALNSTGRWLYN). The segment at 47 to 73 (GRWLYNTGNRFVHSNTFNQIKQGIQDS) is interaction with hexon protein. The Nuclear export signal motif lies at 66–75 (IKQGIQDSGV). 2 disordered regions span residues 136 to 155 (EPPAAPAAPAPAPPLVPTTR) and 166 to 203 (PPVTSSAPAVPVDVPTTLEMRPPPPKRRRKRARPGQWR). The segment covering 138–151 (PAAPAAPAPAPPLV) has biased composition (pro residues). The span at 166–182 (PPVTSSAPAVPVDVPTT) shows a compositional bias: low complexity. Over residues 189–198 (PPKRRRKRAR) the composition is skewed to basic residues. A Nuclear export signal motif is present at residues 204–215 (ARLDSLSGTGVA). The segment at 206–212 (LDSLSGT) is interaction with hexon protein. A binds to importin alpha/beta, involved in hexon nuclear import region spans residues 213 to 223 (GVATATRRMCY).

This sequence belongs to the adenoviridae protein VI family. Interacts with hexon protein; this interaction allows nuclear import of hexon trimers and possibly pre-capsid assembly. Interacts (via C-terminal NLS) with importin alpha/beta. As to quaternary structure, interacts (via PPxY motif) with host NEDD4 ubiquitine ligase; this interaction might play a role in virus intracellular transport during entry. Part of a complex composed of the core-capsid bridging protein, the endosome lysis protein VI and the hexon-linking protein VIII; these interactions bridge the virus core to the capsid. Interacts with peripentonal hexons; this interaction stabilizes the capsid by gluing two peripentonal hexons together and joining them with an adjacent group-of-nine hexon. In terms of assembly, heterodimer with the viral protease; disulfide-linked. Interacts with the viral protease. Ubiquitinated by Nedd4 following partial capsid disassembly; which might play a role in intracellular virus movement during entry. In terms of processing, contains the major nuclear import and export signals. Proteolytically removed during virion maturation. The processing of the C-terminus turns the precursor into a mature viral structural protein and abrogates its ability to promote hexon import and act as a potential chaperone protein.

It is found in the host nucleus. Its subcellular location is the host cytoplasm. It localises to the virion. Its function is as follows. During virus assembly, promotes hexon trimers nuclear import through nuclear pore complexes via an importin alpha/beta-dependent mechanism. By analogy to herpesviruses capsid assembly, might act as a chaperone to promote the formation of the icosahedral capsid. Structural component of the virion that provides increased stability to the particle shell through its interaction with the core-capsid bridging protein and the hexon-linking protein VIII. Fibers shedding during virus entry into host cell allows the endosome lysis protein to be exposed as a membrane-lytic peptide. Exhibits pH-independent membrane fragmentation activity and probably mediates viral rapid escape from host endosome via organellar membrane lysis. It is not clear if it then remains partially associated with the capsid and involved in the intracellular microtubule-dependent transport of capsid to the nucleus, or if it is lost during endosomal penetration. In terms of biological role, cofactor that activates the viral protease. Binds to viral protease in a 1:1 ratio. The chain is Pre-protein VI from Fowl adenovirus A serotype 1 (strain CELO / Phelps) (FAdV-1).